Consider the following 184-residue polypeptide: Oligoribonuclease (184 aa).

The 164-residue stretch at 8 to 171 (LIWIDLEMTG…DDIRESIAEL (164 aa)) folds into the Exonuclease domain. Y129 is an active-site residue.

The protein belongs to the oligoribonuclease family.

It is found in the cytoplasm. 3'-to-5' exoribonuclease specific for small oligoribonucleotides. The protein is Oligoribonuclease of Pasteurella multocida (strain Pm70).